The sequence spans 398 residues: Meiotically up-regulated gene 126 protein (398 aa).

2 disordered regions span residues 30 to 81 (EEME…QRHR) and 119 to 260 (FESD…NSNS). Polar residues-rich tracts occupy residues 119 to 135 (FESD…NFPT) and 183 to 199 (VQEN…QEPQ). Residues 210-222 (QANQQETSSNQEE) show a composition bias toward low complexity. Residues 224-236 (SFDRQETQDDKQK) are compositionally biased toward basic and acidic residues. A compositionally biased stretch (polar residues) spans 248–260 (RNRNQATITNSNS). Transmembrane regions (helical) follow at residues 269–289 (IFVI…DLIE), 305–325 (IFLW…YLAL), 341–361 (GACF…CFLI), and 373–393 (LEIY…GAIY).

Its subcellular location is the membrane. Has a role in meiosis. The sequence is that of Meiotically up-regulated gene 126 protein (mug126) from Schizosaccharomyces pombe (strain 972 / ATCC 24843) (Fission yeast).